Consider the following 622-residue polypeptide: Microtubule-associated protein 70-1 (622 aa).

The segment at 1-27 (MSDVSADGGFLSAEQATTPVAIPTPYP) is disordered. Positions 66 to 365 (DPVKVELNRL…LAISDRAAKS (300 aa)) form a coiled coil. Residues 250–483 (ILDRMHRQKV…YSFNKACDET (234 aa)) form a required for targeting to microtubules region. 2 disordered regions span residues 388–512 (SSIS…TEDN) and 579–622 (AAMR…RSTQ). Polar residues-rich tracts occupy residues 400 to 425 (SMSN…SNGF) and 432 to 453 (MRNS…TSKS). Basic and acidic residues-rich tracts occupy residues 479–501 (ACDE…EKPP) and 579–591 (AAMR…DNRA). A coiled-coil region spans residues 541-590 (DKDDAIEMLAKKVETLTKAMEVEAKKMRREVAAMEKEVAAMRVDKDQDNR). The segment covering 594–605 (SSNTKPSSNTAQ) has biased composition (polar residues).

This sequence belongs to the MAP70 family. In terms of assembly, interacts with MAP70.5 and itself.

The protein localises to the cytoplasm. Its subcellular location is the cytoskeleton. It localises to the phragmoplast. It is found in the spindle. Plant-specific protein that interact with microtubules. In association with MAP70.5, is essential for the normal banding pattern of secondary cell wall and for the proper development of xylem tracheary elements and wood formation. The polypeptide is Microtubule-associated protein 70-1 (MAP70.1) (Arabidopsis thaliana (Mouse-ear cress)).